The primary structure comprises 93 residues: UPF0250 protein PA3998 (93 aa).

Belongs to the UPF0250 family.

The chain is UPF0250 protein PA3998 from Pseudomonas aeruginosa (strain ATCC 15692 / DSM 22644 / CIP 104116 / JCM 14847 / LMG 12228 / 1C / PRS 101 / PAO1).